The primary structure comprises 96 residues: Large ribosomal subunit protein bL28 (96 aa).

A disordered region spans residues 1–23 (MSRVCELSGKAPMTGNTVSHANN).

This sequence belongs to the bacterial ribosomal protein bL28 family.

The protein is Large ribosomal subunit protein bL28 of Cereibacter sphaeroides (strain ATCC 17029 / ATH 2.4.9) (Rhodobacter sphaeroides).